A 491-amino-acid polypeptide reads, in one-letter code: UDP-N-acetylmuramate--L-alanine ligase (491 aa).

126 to 132 (GTHGKTT) contributes to the ATP binding site.

It belongs to the MurCDEF family.

The protein localises to the cytoplasm. It carries out the reaction UDP-N-acetyl-alpha-D-muramate + L-alanine + ATP = UDP-N-acetyl-alpha-D-muramoyl-L-alanine + ADP + phosphate + H(+). It functions in the pathway cell wall biogenesis; peptidoglycan biosynthesis. Its function is as follows. Cell wall formation. In Shigella dysenteriae serotype 1 (strain Sd197), this protein is UDP-N-acetylmuramate--L-alanine ligase.